The chain runs to 638 residues: MDEILNTINSPRDLKKLSLPEMTQLANEIRQLLVKSVAKCGGHLASNLGVVELSLALHTVFDSPEDKIIWDVGHQAYVHKILTGRREQMSTLRQYGGISGFPKVEESEYDAFNTGHSSTSISAALGMALARDLQGQSNSVVAVIGDGALTAGMAFEALNHAGQEDSDLIVVLNDNEMSISKNVGAMSAYLNRLRTDPSYSRTKEEIESVLNRIPGIGPNLARAAGKFKDTVKYLMVPGIIFEELGFTYIGPVNGHDLAELKAVLSNIKKMKGPILLHTITQKGKGYEPAFQKPDIFHGVGPFDVDTGTQLKKSLKTYTEIFGDFMLNQAQRDNKLVAITAAMTSGTGLSEFSRNFPERFFDVGICEQHAVTLAAGMASSGLRPVVAVYSTFLQRAYDQIVHDVALQKLPVIFAIDRAGLVGEDGPTHHGAFDFSYLRHIPNLIIMAPADENELVDMLHSAFSMEGPVAIRYPRGVGEGVRIKSERQLLEPGQSRLIAEGQDLAIIAVGRGVSIARDVVDLLAGKGVNPLLVDARFVKPLDRRVIAGAAQKYHRLLTIEDNSLAGGFGSAIGEMLVEEGIDAELLHIALPDEFVEHGRVELLFEQLNMNPDSILESIAGKWPELFSAGSRWELLKFGQN.

Thiamine diphosphate contacts are provided by residues H74 and 115–117 (GHS). D146 provides a ligand contact to Mg(2+). Thiamine diphosphate-binding positions include 147–148 (GA), N175, Y286, and E366. N175 contacts Mg(2+).

The protein belongs to the transketolase family. DXPS subfamily. In terms of assembly, homodimer. The cofactor is Mg(2+). Requires thiamine diphosphate as cofactor.

The enzyme catalyses D-glyceraldehyde 3-phosphate + pyruvate + H(+) = 1-deoxy-D-xylulose 5-phosphate + CO2. The protein operates within metabolic intermediate biosynthesis; 1-deoxy-D-xylulose 5-phosphate biosynthesis; 1-deoxy-D-xylulose 5-phosphate from D-glyceraldehyde 3-phosphate and pyruvate: step 1/1. In terms of biological role, catalyzes the acyloin condensation reaction between C atoms 2 and 3 of pyruvate and glyceraldehyde 3-phosphate to yield 1-deoxy-D-xylulose-5-phosphate (DXP). The polypeptide is 1-deoxy-D-xylulose-5-phosphate synthase (Syntrophomonas wolfei subsp. wolfei (strain DSM 2245B / Goettingen)).